Here is a 153-residue protein sequence, read N- to C-terminus: MAENYAGLTQLGQTVSQPASPDQAVLEKVPNPTPGKAYMIRFTAPEFTSLCPLTGQPDFAHIVLDYVPRDWIVESKSLKLFLTSFRNVGSFHEACSMKIAERVVSLLDPVWLRIGAYWYPRGGIPIDVFWQTGSPPDGVWIPAQDVPGYRGRG.

Cysteine 51 acts as the Thioimide intermediate in catalysis. Aspartate 58 functions as the Proton donor in the catalytic mechanism. Residues 73–75 (VES) and 92–93 (HE) contribute to the substrate site.

The protein belongs to the GTP cyclohydrolase I family. QueF type 1 subfamily.

It is found in the cytoplasm. The enzyme catalyses 7-aminomethyl-7-carbaguanine + 2 NADP(+) = 7-cyano-7-deazaguanine + 2 NADPH + 3 H(+). Its pathway is tRNA modification; tRNA-queuosine biosynthesis. Catalyzes the NADPH-dependent reduction of 7-cyano-7-deazaguanine (preQ0) to 7-aminomethyl-7-deazaguanine (preQ1). The chain is NADPH-dependent 7-cyano-7-deazaguanine reductase from Granulibacter bethesdensis (strain ATCC BAA-1260 / CGDNIH1).